Consider the following 258-residue polypeptide: Small ribosomal subunit protein uS2 (258 aa).

The segment at 226–258 (QGVSNEEVAAEQNIDLDEKEKSEETEATEATEE) is disordered.

This sequence belongs to the universal ribosomal protein uS2 family.

The sequence is that of Small ribosomal subunit protein uS2 from Staphylococcus aureus (strain COL).